The sequence spans 624 residues: Probable potassium transport system protein Kup 1 (624 aa).

12 consecutive transmembrane segments (helical) span residues 10–30, 48–68, 94–114, 133–153, 159–179, 210–230, 242–262, 270–290, 331–351, 363–383, 388–408, and 413–433; these read LALGALGVVFGDIGTSPLYAL, LSLIFWSLIIVVSFKYLMIIF, PLFYIVAIFGAGLLLGDGMLT, LYPYVLPIASLILILLFSLQA, IGYLFGPLILVWFITIAILGI, LLLGGIFLVVTGGEALFADIG, FFAALPCLLLNYFGQGANLIV, PFFMIAPSWFYLPLIIIATVA, IYVPQINFILFIGTMAFCLAF, IAVNLEMLLVDAMVAYAAISI, IFNVMFLFGLFLLIDLAFLGA, and FITGGWVPIVLAFFIAFIMYS.

Belongs to the HAK/KUP transporter (TC 2.A.72) family.

The protein resides in the cell inner membrane. It carries out the reaction K(+)(in) + H(+)(in) = K(+)(out) + H(+)(out). Transport of potassium into the cell. Likely operates as a K(+):H(+) symporter. The polypeptide is Probable potassium transport system protein Kup 1 (Legionella pneumophila (strain Lens)).